The following is a 540-amino-acid chain: Terminase large subunit (540 aa).

Aspartate 352, aspartate 424, and aspartate 523 together coordinate Mn(2+).

This sequence belongs to the skunavirus terminase large subunit family. In terms of assembly, interacts with the terminase small subunit; the active complex is probably heterooligomeric. Mn(2+) is required as a cofactor. The cofactor is Mg(2+).

The terminase large subunit acts as an ATP driven molecular motor necessary for viral DNA translocation into empty capsids and as an endonuclease that cuts the viral genome to initiate and to end a packaging reaction. The terminase lies at a unique vertex of the procapsid and is composed of two subunits, a small terminase subunit involved in viral DNA recognition (packaging sequence), and a large terminase subunit possessing endonucleolytic and ATPase activities. Both terminase subunits heterooligomerize and are docked on the portal protein to form the packaging machine. The terminase large subunit exhibits endonuclease activity and cleaves the viral genome concatemer. This chain is Terminase large subunit, found in Lactococcus lactis (Lactococcus lactis bacteriophage SK1).